An 82-amino-acid polypeptide reads, in one-letter code: MIKLRLKRYGKKREVSYRIVAINSSSRRDGRPLEELGFYNPRTDETRLNVPGIVKRLKEGAQPTETVRSILQKAQVFEQVNA.

Belongs to the bacterial ribosomal protein bS16 family.

In Rippkaea orientalis (strain PCC 8801 / RF-1) (Cyanothece sp. (strain PCC 8801)), this protein is Small ribosomal subunit protein bS16.